A 123-amino-acid polypeptide reads, in one-letter code: DNA-directed RNA polymerase subunit omega (123 aa).

Residues 72–100 (QRVLPSEDEEDAAREERGQQMEALPAPPV) are disordered.

This sequence belongs to the RNA polymerase subunit omega family. In terms of assembly, the RNAP catalytic core consists of 2 alpha, 1 beta, 1 beta' and 1 omega subunit. When a sigma factor is associated with the core the holoenzyme is formed, which can initiate transcription.

The enzyme catalyses RNA(n) + a ribonucleoside 5'-triphosphate = RNA(n+1) + diphosphate. Functionally, promotes RNA polymerase assembly. Latches the N- and C-terminal regions of the beta' subunit thereby facilitating its interaction with the beta and alpha subunits. The polypeptide is DNA-directed RNA polymerase subunit omega (Maricaulis maris (strain MCS10) (Caulobacter maris)).